A 376-amino-acid chain; its full sequence is PqqA peptide cyclase (376 aa).

The 216-residue stretch at 4-219 folds into the Radical SAM core domain; sequence VPPPLSVLLE…VETARRSLGD (216 aa). Positions 18, 22, and 25 each coordinate [4Fe-4S] cluster.

The protein belongs to the radical SAM superfamily. PqqE family. In terms of assembly, interacts with PqqD. The interaction is necessary for activity of PqqE. It depends on [4Fe-4S] cluster as a cofactor.

It catalyses the reaction [PQQ precursor protein] + S-adenosyl-L-methionine = E-Y cross-linked-[PQQ precursor protein] + 5'-deoxyadenosine + L-methionine + H(+). The protein operates within cofactor biosynthesis; pyrroloquinoline quinone biosynthesis. Functionally, catalyzes the cross-linking of a glutamate residue and a tyrosine residue in the PqqA protein as part of the biosynthesis of pyrroloquinoline quinone (PQQ). The sequence is that of PqqA peptide cyclase from Xanthomonas campestris pv. campestris (strain B100).